The sequence spans 2883 residues: Desmoplakin (2883 aa).

The segment at 1–21 is disordered; that stretch reads MSCNGGSHPRINTLGRMTRAE. Positions 1 to 596 are interaction with PKP1, JUP, PKP2; the sequence is MSCNGGSHPR…DYMKTIEDLE (596 aa). Residues 1–1068 form a globular 1 region; sequence MSCNGGSHPR…ANSENCNKNK (1068 aa). The residue at position 22 (S22) is a Phosphoserine. At T59 the chain carries Phosphothreonine. At S65 the chain carries Phosphoserine. Y68 is modified (phosphotyrosine). The residue at position 73 (T73) is a Phosphothreonine. Residues S177, S178, and S188 each carry the phosphoserine modification. Spectrin repeat units lie at residues 190-283 and 284-387; these read SGWD…HLRQ and LQNI…LKEN. The stretch at 388-458 is one Spectrin 3a repeat; it reads AAYFQFFEEA…NLVNKSKKIV (71 aa). One can recognise an SH3 domain in the interval 470-527; that stretch reads NKPIILRALCDYKQDQKIVHKGDECILKDNNERSKWYVTGPGGVDMLVPSVGLIIPPP. One copy of the Spectrin 3b repeat lies at 528 to 557; the sequence is NPLAVDLSCKIEQYYEAILALWNQLYINMK. Spectrin repeat units lie at residues 558-639, 666-781, and 782-895; these read SLVS…IQLP, VIET…SLCS, and VRAL…DLEK. Positions 1034 to 1956 form a coiled coil; it reads KSLEDLKLKN…LQKEIEKLRQ (923 aa). The central fibrous rod domain stretch occupies residues 1069 to 1957; sequence FLDQNLQKYQ…QKEIEKLRQR (889 aa). 3 positions are modified to phosphoserine: S1670, S1720, and S2036. The segment at 1958–2882 is globular 2; that stretch reads PYGSHRETQT…YSFSSSSIGG (925 aa). Positions 1972–2220 are 4.5 X 38 AA tandem repeats (Domain A); it reads TVDSSKLVFD…LLLSVQKRSM (249 aa). 17 Plectin repeats span residues 2021-2057, 2058-2095, 2096-2133, 2134-2171, 2175-2209, 2210-2245, 2263-2300, 2301-2338, 2339-2376, 2377-2414, 2418-2452, 2468-2505, 2519-2556, 2622-2659, 2660-2697, 2736-2773, and 2774-2811; these read QPFLRGAGAIAGASASPKEKYSLVEAKRKKFITPEST, VMLLEAQAATGGIIDPHRNEKLTVDNAVARDLIDFDDR, QQIYTAEKAITGFDDPFSGKTVSVSEAIKKNLIDRETG, MRLLEAQLASGGVVDPVNSVFLPKDVALARGLIDRDLY, NDPRDSQKNFVDPITKKKVSYMQLRERCRIEPHTG, LLLLSVQKRSMSFQGIRQPVTVTELVDSGILRPSTV, KDFLQGSSCIAGIYNETTKQKLGIYEAMKIGLVRPGTA, LELLEAQAATGFIVDPVSNLRLPVEEAYKRGLVGIEFK, EKLLSAERAVTGYNDPETGNIISLFQAMNKELIEKGHG, IRLLEAQIATGGIIDPKESHRLPVDMAYKRGYFNEELS, SDPSDDTKGFFDPNTEENLTYLQLKERCIKDEETG, SQKNTLRKRRVVIVDPETNKEMSVQEAYKKGLIDYDTF, TITGSDGSTRVVLVDRKTGSQYDIQDAIDKGLVDRKFF, SDPLEESSPIAAIFDTENLEKISIAEGIERGIVDSITG, QRLLEAQACTGGIIHPTTGQKLSLQDAVNQGLIDQDMA, QRFLEFQFLTGGLVDPEVHGRISTEEAIRKGFIDGRAA, and QRLQDISSYAKILTCPKTKLKISYKDAMNRSMVEDITG. Residues S2219, S2221, and S2237 each carry the phosphoserine modification. A 4.5 X 38 AA tandem repeats (Domain B) region spans residues 2256–2458; that stretch reads DEVGERIKDF…EETGLCLLPL (203 aa). The Omega-hydroxyceramide glutamate ester moiety is linked to residue Q2492. A 4.5 X 38 AA tandem repeats (Domain C) region spans residues 2621-2833; that stretch reads LSDPLEESSP…GLPSPYNMSA (213 aa). Phosphoserine is present on residues S2822 and S2827. The segment at 2822-2883 is disordered; the sequence is SKGLPSPYNM…SFSSSSIGGY (62 aa). A Phosphotyrosine modification is found at Y2829. S2832 and S2836 each carry phosphoserine. The tract at residues 2835-2858 is 6 X 4 AA tandem repeats of G-S-R-[SR]; the sequence is GSRSGSRSGSRSGSRSGSRSGSRR. A compositionally biased stretch (low complexity) spans 2835–2858; that stretch reads GSRSGSRSGSRSGSRSGSRSGSRR. Residues R2837 and R2858 each carry the omega-N-methylarginine modification. S2860 carries the post-translational modification Phosphoserine. T2864 bears the Phosphothreonine mark. Low complexity predominate over residues 2867–2883; sequence SSYSYSYSFSSSSIGGY. S2879 carries the post-translational modification Phosphoserine.

This sequence belongs to the plakin or cytolinker family. As to quaternary structure, homodimer. Interacts with COL17A1 (via cytoplasmic region). Interacts with DSC2. Interacts with PKP1. Interacts with PKP2. Interacts weakly with TMEM65. Phosphorylation at Ser-2860 increases association with intermediate filament cytokeratin, potentially facilitating interaction between desmosome junctions and intermediate filament architecture. As to expression, expressed in undifferentiated keratinocytes of the epidermis at birth, expression increases as differentiation proceeds (at protein level). Abundantly expressed in the suprabasal layers and weakly in the basal layers of the outer hair root sheath (at protein level). Expressed at intercalated disks in cardiomyocytes (at protein level).

It localises to the cell junction. The protein resides in the desmosome. Its subcellular location is the cell membrane. It is found in the cytoplasm. In terms of biological role, major high molecular weight protein of desmosomes. Regulates profibrotic gene expression in cardiomyocytes via activation of the MAPK14/p38 MAPK signaling cascade and increase in TGFB1 protein abundance. The polypeptide is Desmoplakin (Mus musculus (Mouse)).